The sequence spans 288 residues: Diaminopimelate epimerase (288 aa).

Residues Asn-13, Gln-51, and Asn-71 each coordinate substrate. Cys-80 serves as the catalytic Proton donor. Residues 81–82 (GN), Asn-166, Asn-200, and 218–219 (ER) contribute to the substrate site. Catalysis depends on Cys-227, which acts as the Proton acceptor. Position 228-229 (228-229 (GT)) interacts with substrate.

The protein belongs to the diaminopimelate epimerase family. Homodimer.

It is found in the cytoplasm. The enzyme catalyses (2S,6S)-2,6-diaminopimelate = meso-2,6-diaminopimelate. Its pathway is amino-acid biosynthesis; L-lysine biosynthesis via DAP pathway; DL-2,6-diaminopimelate from LL-2,6-diaminopimelate: step 1/1. In terms of biological role, catalyzes the stereoinversion of LL-2,6-diaminopimelate (L,L-DAP) to meso-diaminopimelate (meso-DAP), a precursor of L-lysine and an essential component of the bacterial peptidoglycan. In Caulobacter vibrioides (strain ATCC 19089 / CIP 103742 / CB 15) (Caulobacter crescentus), this protein is Diaminopimelate epimerase.